The primary structure comprises 738 residues: Multifunctional procollagen lysine hydroxylase and glycosyltransferase LH3 (738 aa).

The signal sequence occupies residues 1 to 24; it reads MTSSGPGPRFLLLLPLLLPPAASA. Residues 25–290 are required for glycosyltransferase activity; sequence SDRPRGRDPV…FCNQDRRTLP (266 aa). 44-46 is a binding site for UDP; sequence VAT. Residue asparagine 63 is glycosylated (N-linked (GlcNAc...) asparagine). Aspartate 112, aspartate 115, and histidine 253 together coordinate Mn(2+). 112 to 114 lines the UDP pocket; the sequence is DSY. 256 to 259 provides a ligand contact to UDP; sequence GPTK. Cystine bridges form between cysteine 279/cysteine 282 and cysteine 379/cysteine 385. Residues 295-520 are accessory region; it reads PPRVFLAVFV…EFGRLLATSR (226 aa). Residue asparagine 548 is glycosylated (N-linked (GlcNAc...) asparagine). Cysteine 563 and cysteine 698 are disulfide-bonded. Residues arginine 599 and tyrosine 656 each coordinate 2-oxoglutarate. The Fe2OG dioxygenase domain maps to 647–738; it reads RAVMNFVVRY…RYIMVSFVDP (92 aa). Residues histidine 667 and aspartate 669 each contribute to the Fe cation site. Positions 672–715 are important for dimerization; sequence TFTLNVALNHKGLDYEGGGCRFLRYDCVISSPRKGWALLHPGRL. Position 676 (asparagine 676) interacts with 2-oxoglutarate. Histidine 719 serves as a coordination point for Fe cation. 2-oxoglutarate is bound at residue arginine 729.

Homodimer. It depends on Fe(2+) as a cofactor. The cofactor is L-ascorbate. Mn(2+) is required as a cofactor.

The protein localises to the rough endoplasmic reticulum. It localises to the endoplasmic reticulum lumen. It is found in the endoplasmic reticulum membrane. Its subcellular location is the secreted. The protein resides in the extracellular space. It carries out the reaction L-lysyl-[collagen] + 2-oxoglutarate + O2 = (5R)-5-hydroxy-L-lysyl-[collagen] + succinate + CO2. The enzyme catalyses (5R)-5-hydroxy-L-lysyl-[collagen] + UDP-alpha-D-galactose = (5R)-5-O-(beta-D-galactosyl)-5-hydroxy-L-lysyl-[collagen] + UDP + H(+). The catalysed reaction is (5R)-5-O-(beta-D-galactosyl)-5-hydroxy-L-lysyl-[collagen] + UDP-alpha-D-glucose = (5R)-5-O-[alpha-D-glucosyl-(1-&gt;2)-beta-D-galactosyl]-5-hydroxy-L-lysyl-[collagen] + UDP + H(+). Functionally, multifunctional enzyme that catalyzes a series of post-translational modifications on Lys residues in procollagen. Plays a redundant role in catalyzing the formation of hydroxylysine residues in -Xaa-Lys-Gly- sequences in collagens. Plays a redundant role in catalyzing the transfer of galactose onto hydroxylysine groups, giving rise to galactosyl 5-hydroxylysine. Has an essential role by catalyzing the subsequent transfer of glucose moieties, giving rise to 1,2-glucosylgalactosyl-5-hydroxylysine residues. Catalyzes hydroxylation and glycosylation of Lys residues in the MBL1 collagen-like domain, giving rise to hydroxylysine and 1,2-glucosylgalactosyl-5-hydroxylysine residues. Catalyzes hydroxylation and glycosylation of Lys residues in the ADIPOQ collagen-like domain, giving rise to hydroxylysine and 1,2-glucosylgalactosyl-5-hydroxylysine residues. Essential for normal biosynthesis and secretion of type IV collagens. Essential for normal formation of basement membranes. This chain is Multifunctional procollagen lysine hydroxylase and glycosyltransferase LH3 (PLOD3), found in Pongo abelii (Sumatran orangutan).